A 397-amino-acid polypeptide reads, in one-letter code: Cephalotocin receptor 1 (397 aa).

Residues 1-48 lie on the Extracellular side of the membrane; sequence MRYITTHPNEISTQIWNNFSSTEIWSNFSAAKNETQPIRRNQDLANAE. Residues N18, N27, and N33 are each glycosylated (N-linked (GlcNAc...) asparagine). The chain crosses the membrane as a helical span at residues 49-69; sequence VITLAVVIIITVIGNSIVLIT. Over 70-91 the chain is Cytoplasmic; the sequence is LFQRRKKLTRMHLFILHLSVTD. Residues 92-112 traverse the membrane as a helical segment; sequence LFVAFFNNLPQMIWDITFLFL. At 113-120 the chain is on the extracellular side; sequence GTDLLCRL. A disulfide bridge connects residues C118 and C194. Residues 121 to 141 form a helical membrane-spanning segment; that stretch reads VTYLQSVAMYASSYVLVATAI. The Cytoplasmic segment spans residues 142–162; sequence DRYFAICHPLSSHKWTTARVH. The chain crosses the membrane as a helical span at residues 163 to 183; sequence VMVFIAWMLSFLFSTPQLFIW. Topologically, residues 184–205 are extracellular; the sequence is SMQFSNIGLTCQATFDPEWTLK. A helical transmembrane segment spans residues 206-226; the sequence is FYITWLTVAIWILPTIALTLF. At 227-293 the chain is on the cytoplasmic side; sequence YGMMCFAVWK…RGISRAKVRS (67 aa). A helical membrane pass occupies residues 294 to 314; the sequence is VALTLSVVACCFICWSPFFVC. Residues 315–331 lie on the Extracellular side of the membrane; that stretch reads QMWAAWDENAPYSGAIY. A helical transmembrane segment spans residues 332 to 352; the sequence is TILLLLSSLNSCTNPWIYMIF. The Cytoplasmic segment spans residues 353-397; that stretch reads SVFQHRAKTSRFVNDEETTSVTVLSSRNDIRLMSMKKKLEQTARN.

The protein belongs to the G-protein coupled receptor 1 family. Vasopressin/oxytocin receptor subfamily. In terms of tissue distribution, present in brain, buccal ganglion, gastric ganglion, olfactory lube, peduncle lobe, optical lobe, pancreas, the oviduct and the ovary.

It is found in the cell membrane. In terms of biological role, acts as a receptor for cephalotocin. This is Cephalotocin receptor 1 from Octopus vulgaris (Common octopus).